Reading from the N-terminus, the 475-residue chain is Threonine synthase (475 aa).

Lys120 bears the N6-(pyridoxal phosphate)lysine mark.

This sequence belongs to the threonine synthase family. Requires pyridoxal 5'-phosphate as cofactor.

The enzyme catalyses O-phospho-L-homoserine + H2O = L-threonine + phosphate. It functions in the pathway amino-acid biosynthesis; L-threonine biosynthesis; L-threonine from L-aspartate: step 5/5. Functionally, catalyzes the gamma-elimination of phosphate from L-phosphohomoserine and the beta-addition of water to produce L-threonine. The sequence is that of Threonine synthase (thrC) from Methylobacillus glycogenes.